The following is a 1679-amino-acid chain: Furin-like protease 2 (1679 aa).

Polar residues predominate over residues 1–10 (MSNTTRSSRV). The segment at 1–42 (MSNTTRSSRVTIGRIGTTPQITDPWSSGLEKQRPSRCGGPKS) is disordered. N-linked (GlcNAc...) asparagine glycans are attached at residues asparagine 3, asparagine 109, and asparagine 130. Positions 139 to 164 (VSSLHSSRRTNPPSSSSSSSSNVDVD) are disordered. Low complexity predominate over residues 147–160 (RTNPPSSSSSSSSN). N-linked (GlcNAc...) asparagine glycosylation occurs at asparagine 205. The Peptidase S8 domain maps to 383-705 (QWYLNGGAKD…YGLMDAGAMV (323 aa)). Aspartate 417 acts as the Charge relay system in catalysis. A disordered region spans residues 424–456 (HPDLAQNYDPEASFDINGNDSDPTPQDNGDNKH). The segment covering 439-451 (INGNDSDPTPQDN) has biased composition (polar residues). Asparagine 442 carries N-linked (GlcNAc...) asparagine glycosylation. The active-site Charge relay system is histidine 456. 2 cysteine pairs are disulfide-bonded: cysteine 473–cysteine 629 and cysteine 565–cysteine 595. The N-linked (GlcNAc...) asparagine glycan is linked to asparagine 480. The Charge relay system role is filled by serine 637. The P/Homo B domain occupies 714–852 (VPPQHICKSR…QLIFYGTSTQ (139 aa)). A disulfide bridge connects residues cysteine 720 and cysteine 748. Asparagine 927 is a glycosylation site (N-linked (GlcNAc...) asparagine). FU repeat units follow at residues 961 to 1006 (KKIL…RSFP), 1009 to 1056 (VGIC…GYFE), 1060 to 1104 (NRTC…DTYE), 1107 to 1152 (DNKC…GFYA), 1156 to 1204 (RLEC…SEFY), 1208 to 1253 (EGQC…GFFV), 1256 to 1299 (GSLC…GYYS), 1301 to 1346 (RGIC…GFYK), 1348 to 1393 (DFGC…QYYD), and 1396 to 1443 (SATC…QTLA). An N-linked (GlcNAc...) asparagine glycan is attached at asparagine 1060. Asparagine 1181 carries an N-linked (GlcNAc...) asparagine glycan. N-linked (GlcNAc...) asparagine glycosylation is found at asparagine 1274 and asparagine 1277. Asparagine 1439 carries N-linked (GlcNAc...) asparagine glycosylation. A helical transmembrane segment spans residues 1512 to 1532 (AIAVAICLLIITIFSIIFAVL). At 1533–1679 (QRNSNHVSRN…STTSRTNIRS (147 aa)) the chain is on the cytoplasmic side. The tract at residues 1660 to 1679 (TNAERKNHPSSTTSRTNIRS) is disordered. The segment covering 1668–1679 (PSSTTSRTNIRS) has biased composition (polar residues).

This sequence belongs to the peptidase S8 family. Furin subfamily. Requires Ca(2+) as cofactor. In terms of tissue distribution, transient expression in a subset of central nervous system neurons during embryonic stages 12-13. Expression in developing tracheal tree from stage 13 to end of embryonic development.

Its subcellular location is the membrane. It catalyses the reaction Release of mature proteins from their proproteins by cleavage of -Arg-Xaa-Yaa-Arg-|-Zaa- bonds, where Xaa can be any amino acid and Yaa is Arg or Lys. Releases albumin, complement component C3 and von Willebrand factor from their respective precursors.. In terms of biological role, furin is likely to represent the ubiquitous endoprotease activity within constitutive secretory pathways and capable of cleavage at the RX(K/R)R consensus motif. The chain is Furin-like protease 2 (Fur2) from Drosophila melanogaster (Fruit fly).